The following is a 547-amino-acid chain: Sensor histidine kinase CitA (547 aa).

Topologically, residues methionine 1–arginine 23 are cytoplasmic. The chain crosses the membrane as a helical span at residues isoleucine 24–threonine 44. The Periplasmic portion of the chain corresponds to aspartate 45–serine 180. Citrate contacts are provided by arginine 109, histidine 112, arginine 150, and lysine 152. The helical transmembrane segment at leucine 181–alanine 201 threads the bilayer. The Cytoplasmic segment spans residues arginine 202–glycine 547. One can recognise a PAS domain in the interval isoleucine 225–glutamate 264. The 196-residue stretch at alanine 347–arginine 542 folds into the Histidine kinase domain. Histidine 350 is subject to Phosphohistidine; by autocatalysis.

In terms of assembly, homodimer. In vitro CitB and the CitA kinase domain form a complex, formation of which is enhanced by ATP. Autophosphorylated.

Its subcellular location is the cell inner membrane. It carries out the reaction ATP + protein L-histidine = ADP + protein N-phospho-L-histidine.. Functionally, member of the two-component regulatory system CitA/CitB. Probably activates CitB by phosphorylation. The periplasmic domain binds H-citrate(2-), which is essential for induction of the citrate-fermentation genes. In Klebsiella pneumoniae, this protein is Sensor histidine kinase CitA (citA).